The following is a 196-amino-acid chain: Pyridoxal 5'-phosphate synthase subunit PdxT (196 aa).

47 to 49 (GES) is a binding site for L-glutamine. C79 serves as the catalytic Nucleophile. Residues R106 and 134-135 (IR) each bind L-glutamine. Residues H170 and E172 each act as charge relay system in the active site.

The protein belongs to the glutaminase PdxT/SNO family. In the presence of PdxS, forms a dodecamer of heterodimers. Only shows activity in the heterodimer.

It carries out the reaction aldehydo-D-ribose 5-phosphate + D-glyceraldehyde 3-phosphate + L-glutamine = pyridoxal 5'-phosphate + L-glutamate + phosphate + 3 H2O + H(+). The catalysed reaction is L-glutamine + H2O = L-glutamate + NH4(+). It functions in the pathway cofactor biosynthesis; pyridoxal 5'-phosphate biosynthesis. Functionally, catalyzes the hydrolysis of glutamine to glutamate and ammonia as part of the biosynthesis of pyridoxal 5'-phosphate. The resulting ammonia molecule is channeled to the active site of PdxS. The sequence is that of Pyridoxal 5'-phosphate synthase subunit PdxT from Bacillus cereus (strain G9842).